The sequence spans 936 residues: Lon protease homolog, mitochondrial (936 aa).

Residues 1 to 40 (MYATRAIARRLERHAARCKGAHVARAVRGARARTTSAPRA) constitute a mitochondrion transit peptide. The interval 65–95 (AFVSSVDGDGSTGSTGSSSSSSSSAFGDSAS) is disordered. The span at 66–95 (FVSSVDGDGSTGSTGSSSSSSSSAFGDSAS) shows a compositional bias: low complexity. A Lon N-terminal domain is found at 112–352 (VLAVPLPRRP…ATLELLKKEV (241 aa)). Residue 507 to 514 (GPPGVGKT) participates in ATP binding. The Lon proteolytic domain maps to 748–932 (VTPPGVVTGL…DEVYRQALDW (185 aa)). Residues S838 and K881 contribute to the active site.

The protein belongs to the peptidase S16 family. Homohexamer or homoheptamer. Organized in a ring with a central cavity.

Its subcellular location is the mitochondrion matrix. The catalysed reaction is Hydrolysis of proteins in presence of ATP.. Its function is as follows. ATP-dependent serine protease that mediates the selective degradation of misfolded, unassembled or oxidatively damaged polypeptides as well as certain short-lived regulatory proteins in the mitochondrial matrix. May also have a chaperone function in the assembly of inner membrane protein complexes. Participates in the regulation of mitochondrial gene expression and in the maintenance of the integrity of the mitochondrial genome. Binds to mitochondrial DNA in a site-specific manner. This Ostreococcus lucimarinus (strain CCE9901) protein is Lon protease homolog, mitochondrial.